Reading from the N-terminus, the 446-residue chain is NADH oxidase (446 aa).

FAD is bound by residues 7-11 (GTNHA), D32, C42, V79, 109-112 (ATGS), K131, and Y158. The active-site Proton acceptor is the H10. C42 functions as the Redox-active in the catalytic mechanism. C42 is subject to Cysteine sulfinic acid (-SO2H). Positions 159, 178, 187, and 244 each coordinate NAD(+). D282 serves as a coordination point for FAD. A298 is an NAD(+) binding site. FAD-binding residues include L299, A300, and S301. G329 is an NAD(+) binding site. An FAD-binding site is contributed by F427.

It belongs to the class-III pyridine nucleotide-disulfide oxidoreductase family. Homodimer. FAD is required as a cofactor.

It carries out the reaction 2 NADH + O2 + 2 H(+) = 2 NAD(+) + 2 H2O. Inhibited by hydrogen peroxide, sulfhydryl reagents and quinine, but not by EDTA. Catalyzes the four-electron reduction of molecular oxygen to water. Active on beta-NADH, but not on alpha-NADH, beta-NADPH or alpha-NADPH. Under aerobic conditions, oxygen acts as the electron acceptor. Under anaerobic conditions, DCIP and MB can replace oxygen as the electron acceptor. This is NADH oxidase from Lactococcus lactis subsp. cremoris (strain MG1363).